The primary structure comprises 254 residues: MPQQIELRNIALQAAQPLVHGVSLTLQRGRVLALVGGSGSGKSLTCAATLGILPAGVRQTAGEILADGKPVSPCALRGIKIATIMQNPRSAFNPLHTMHTHARETCLALGKPADDATLTAAIEAVGLENAARVLKLYPFEMSGGMLQRMMIAMAVLCESPFIIADEPTTDLDVVAQARILDLLESIMQKQAPGMLLVTHDMGVVARLADDVAVMSDGKIVEQGDVETLFNAPKHTVTRSLVSAHLALYGMELAS.

Positions Pro2–Val241 constitute an ABC transporter domain. ATP is bound at residue Gly36–Ser43.

The protein belongs to the ABC transporter superfamily. Nickel importer (TC 3.A.1.5.3) family. As to quaternary structure, the complex is composed of two ATP-binding proteins (NikD and NikE), two transmembrane proteins (NikB and NikC) and a solute-binding protein (NikA).

It localises to the cell inner membrane. The catalysed reaction is Ni(2+)(out) + ATP + H2O = Ni(2+)(in) + ADP + phosphate + H(+). Functionally, part of the ABC transporter complex NikABCDE involved in nickel import. Responsible for energy coupling to the transport system. The protein is Nickel import ATP-binding protein NikD of Escherichia coli (strain K12).